The following is a 681-amino-acid chain: Probable L-type lectin-domain containing receptor kinase VII.2 (681 aa).

The first 23 residues, 1–23 (MFSKVSILLFSLASLLLFRSTTG), serve as a signal peptide directing secretion. The legume-lectin like stretch occupies residues 24 to 260 (IEFIYNSNFT…SHRILSWSFS (237 aa)). Topologically, residues 24–290 (IEFIYNSNFT…SGDSVLKSKG (267 aa)) are extracellular. N-linked (GlcNAc...) asparagine glycans are attached at residues Asn-31, Asn-42, Asn-56, Asn-72, Asn-126, Asn-202, Asn-207, Asn-228, and Asn-263. Residues 291–311 (FIAGVSSGVVLLVSVIGLLCF) form a helical membrane-spanning segment. Topologically, residues 312–681 (YVVRRRRQRL…QTYDSILHGR (370 aa)) are cytoplasmic. Residues 349-624 (FSDENMIGYG…VVQILEQGRL (276 aa)) form the Protein kinase domain. Residues 355–363 (IGYGGNSKV) and Lys-376 each bind ATP. Residue Asp-475 is the Proton acceptor of the active site.

The protein in the C-terminal section; belongs to the protein kinase superfamily. Ser/Thr protein kinase family. It in the N-terminal section; belongs to the leguminous lectin family.

It is found in the cell membrane. The enzyme catalyses L-seryl-[protein] + ATP = O-phospho-L-seryl-[protein] + ADP + H(+). It carries out the reaction L-threonyl-[protein] + ATP = O-phospho-L-threonyl-[protein] + ADP + H(+). This chain is Probable L-type lectin-domain containing receptor kinase VII.2 (LECRK72), found in Arabidopsis thaliana (Mouse-ear cress).